An 874-amino-acid chain; its full sequence is Probable inorganic carbon transporter subunit DabA (874 aa).

The Zn(2+) site is built by Cys398, Asp400, His580, and Cys595.

It belongs to the inorganic carbon transporter (TC 9.A.2) DabA family. Forms a complex with DabB. Requires Zn(2+) as cofactor.

It is found in the cell membrane. In terms of biological role, part of an energy-coupled inorganic carbon pump. The protein is Probable inorganic carbon transporter subunit DabA of Bacillus cereus (strain ZK / E33L).